The primary structure comprises 287 residues: Zinc finger protein SNAI3 (287 aa).

Residues 1-20 (MPRSFLVKTHSSHRVPNYGK) form an SNAG domain region. 4 C2H2-type zinc fingers span residues 147-169 (FECI…QQLH), 178-200 (FTCR…IRTH), 204-226 (CICK…IRTH), and 232-254 (YTCS…LQTH). A C2H2-type 5; degenerate zinc finger spans residues 260-282 (YRCAVCPKAFSRMSLLARHEEAG).

Belongs to the snail C2H2-type zinc-finger protein family. As to expression, highly expressed in skeletal muscle and thymus. Lower expression in heart, lung and spleen.

The protein resides in the nucleus. Seems to inhibit myoblast differentiation. Transcriptional repressor of E-box-dependent transactivation of downstream myogenic bHLHs genes. Binds preferentially to the canonical E-box sequences 5'-CAGGTG-3' and 5'-CACCTG-3'. This is Zinc finger protein SNAI3 (Snai3) from Mus musculus (Mouse).